The primary structure comprises 587 residues: APOBEC1 complementation factor (587 aa).

RRM domains lie at 56-134 (CEIF…ASVD), 136-218 (CRLF…WAEP), and 231-303 (KILY…LAKP). The segment at 360 to 409 (HFPATKGHLSNRAIIRAPSVRGAAGVRGLGGRGYLAYTGLGRGYQVKGDK) is required for nuclear localization. Threonine 491 carries the post-translational modification Phosphothreonine.

In terms of assembly, part of the apolipoprotein B mRNA editing complex with APOBEC1. Interacts with TNPO2; TNPO2 may be responsible for transport of A1CF into the nucleus. Interacts with SYNCRIP. Interacts with CELF2/CUGBP2. Interacts with RBM47.

The protein resides in the nucleus. Its subcellular location is the endoplasmic reticulum. It is found in the cytoplasm. Its function is as follows. Essential component of the apolipoprotein B mRNA editing enzyme complex which is responsible for the postranscriptional editing of a CAA codon for Gln to a UAA codon for stop in APOB mRNA. Binds to APOB mRNA and is probably responsible for docking the catalytic subunit, APOBEC1, to the mRNA to allow it to deaminate its target cytosine. The complex also seems to protect the edited APOB mRNA from nonsense-mediated decay. In Pongo abelii (Sumatran orangutan), this protein is APOBEC1 complementation factor (A1CF).